The chain runs to 266 residues: Cysteine-rich repeat secretory protein 41 (266 aa).

The signal sequence occupies residues 1–26; the sequence is MSSVFGSVHILAMIAIQLLLTHSVSS. 2 Gnk2-homologous domains span residues 33-136 and 142-253; these read YLHH…SVAS and YEND…LYPF.

This sequence belongs to the cysteine-rich repeat secretory protein family.

The protein localises to the secreted. This Arabidopsis thaliana (Mouse-ear cress) protein is Cysteine-rich repeat secretory protein 41 (CRRSP41).